The sequence spans 172 residues: RNA silencing suppressor p19 (172 aa).

The span at 1-20 shows a compositional bias: basic and acidic residues; the sequence is MERAIQGNDAREQANSERWD. Positions 1–37 are disordered; sequence MERAIQGNDAREQANSERWDGGSGGTTSPFKLPDESP.

The protein belongs to the tombusvirus protein p19 family. In terms of assembly, homodimer.

Viral suppressor of RNA silencing which binds specifically to silencing RNAs (siRNAs). Acts as a molecular caliper to specifically select siRNAs based on the length of the duplex region of the RNA. This is RNA silencing suppressor p19 from Tomato bushy stunt virus (strain Ja6) (TBSV).